A 76-amino-acid polypeptide reads, in one-letter code: Candidate secreted effector protein MPL124497 (76 aa).

The first 21 residues, 1–21 (MKLIIFAAISVAFMSFDQVLG), serve as a signal peptide directing secretion.

This sequence belongs to the CPGH1 family.

It is found in the secreted. The protein localises to the host cell. Its subcellular location is the host cytoplasm. The protein resides in the host nucleus. In terms of biological role, rust effector delivered into infected tissues to modulate host functions and contribute to pathogen virulence. Enhances leaf colonization by the bacteria Pseudomonas syringae and the oomycete Hyaloperonospora arabidopsidis pathogens in an Arabidopsis thaliana infection model. The polypeptide is Candidate secreted effector protein MPL124497 (Melampsora larici-populina (strain 98AG31 / pathotype 3-4-7) (Poplar leaf rust fungus)).